Reading from the N-terminus, the 329-residue chain is Ig gamma-2 chain C region (329 aa).

3 disulfides stabilise this stretch: cysteine 28-cysteine 79, cysteine 142-cysteine 202, and cysteine 248-cysteine 308. N-linked (GlcNAc...) asparagine glycosylation occurs at asparagine 178.

It is found in the secreted. The protein is Ig gamma-2 chain C region of Cavia porcellus (Guinea pig).